The chain runs to 157 residues: 2-C-methyl-D-erythritol 2,4-cyclodiphosphate synthase (157 aa).

The a divalent metal cation site is built by D8 and H10. 4-CDP-2-C-methyl-D-erythritol 2-phosphate contacts are provided by residues 8 to 10 (DVH) and 34 to 35 (HS). H42 provides a ligand contact to a divalent metal cation. 4-CDP-2-C-methyl-D-erythritol 2-phosphate is bound by residues 56–58 (DIG), 61–65 (FPDTD), 100–106 (AQAPKMA), 132–135 (TTTE), F139, and R142.

It belongs to the IspF family. In terms of assembly, homotrimer. It depends on a divalent metal cation as a cofactor.

The catalysed reaction is 4-CDP-2-C-methyl-D-erythritol 2-phosphate = 2-C-methyl-D-erythritol 2,4-cyclic diphosphate + CMP. It participates in isoprenoid biosynthesis; isopentenyl diphosphate biosynthesis via DXP pathway; isopentenyl diphosphate from 1-deoxy-D-xylulose 5-phosphate: step 4/6. In terms of biological role, involved in the biosynthesis of isopentenyl diphosphate (IPP) and dimethylallyl diphosphate (DMAPP), two major building blocks of isoprenoid compounds. Catalyzes the conversion of 4-diphosphocytidyl-2-C-methyl-D-erythritol 2-phosphate (CDP-ME2P) to 2-C-methyl-D-erythritol 2,4-cyclodiphosphate (ME-CPP) with a corresponding release of cytidine 5-monophosphate (CMP). The chain is 2-C-methyl-D-erythritol 2,4-cyclodiphosphate synthase from Pseudomonas fluorescens (strain Pf0-1).